The following is a 132-amino-acid chain: ATP synthase epsilon chain (132 aa).

This sequence belongs to the ATPase epsilon chain family. F-type ATPases have 2 components, CF(1) - the catalytic core - and CF(0) - the membrane proton channel. CF(1) has five subunits: alpha(3), beta(3), gamma(1), delta(1), epsilon(1). CF(0) has three main subunits: a, b and c.

Its subcellular location is the cell membrane. In terms of biological role, produces ATP from ADP in the presence of a proton gradient across the membrane. In Bacillus caldotenax, this protein is ATP synthase epsilon chain (atpC).